A 709-amino-acid polypeptide reads, in one-letter code: Disintegrin and metalloproteinase domain-containing protein 5 (709 aa).

Positions 1 to 98 are excised as a propeptide; that stretch reads MKTPISSILK…TLSGFIHVIY (98 aa). Topologically, residues 1–649 are extracellular; the sequence is MKTPISSILK…QQNRGIHPKQ (649 aa). The 194-residue stretch at 141–334 folds into the Peptidase M12B domain; that stretch reads RYIKTDIVVD…QDLECLQDLP (194 aa). 7 disulfide bridges follow: cysteine 247/cysteine 329, cysteine 289/cysteine 314, cysteine 291/cysteine 296, cysteine 406/cysteine 426, cysteine 585/cysteine 597, cysteine 591/cysteine 603, and cysteine 605/cysteine 614. A Disintegrin domain is found at 346-434; sequence RRICGNGILE…YCVPDTFARN (89 aa). An EGF-like; calcium-binding domain is found at 581-615; that stretch reads DFQQCNTSRDCNDHGVCNNFNHCHCDKGYNPPYCE. Residues 650-670 traverse the membrane as a helical segment; sequence QLQLILYITLPLIMIISAVFI. Residues 671 to 709 are Cytoplasmic-facing; sequence KQSKLSRLCGRERSEGTSCITEDSVSNTKMTTNEGSTLH. The interval 690-709 is disordered; that stretch reads ITEDSVSNTKMTTNEGSTLH.

In terms of assembly, interacts with TEX101. Detected in testis.

It localises to the membrane. Its function is as follows. This is a non catalytic metalloprotease-like protein. May play a role in sperm-egg fusion. The polypeptide is Disintegrin and metalloproteinase domain-containing protein 5 (Adam5) (Rattus norvegicus (Rat)).